Consider the following 206-residue polypeptide: Pyrrolidone-carboxylate peptidase 2 (206 aa).

Residues Glu78, Cys141, and His165 contribute to the active site.

It belongs to the peptidase C15 family. In terms of assembly, homotetramer.

It is found in the cytoplasm. It carries out the reaction Release of an N-terminal pyroglutamyl group from a polypeptide, the second amino acid generally not being Pro.. In terms of biological role, removes 5-oxoproline from various penultimate amino acid residues except L-proline. The sequence is that of Pyrrolidone-carboxylate peptidase 2 from Caldanaerobacter subterraneus subsp. tengcongensis (strain DSM 15242 / JCM 11007 / NBRC 100824 / MB4) (Thermoanaerobacter tengcongensis).